The sequence spans 320 residues: Aspartate carbamoyltransferase catalytic subunit (320 aa).

Positions 68 and 69 each coordinate carbamoyl phosphate. Lysine 96 contributes to the L-aspartate binding site. Carbamoyl phosphate contacts are provided by arginine 118, histidine 148, and glutamine 151. Residues arginine 181 and arginine 236 each coordinate L-aspartate. Residues glycine 277 and proline 278 each coordinate carbamoyl phosphate.

Belongs to the aspartate/ornithine carbamoyltransferase superfamily. ATCase family. As to quaternary structure, heterododecamer (2C3:3R2) of six catalytic PyrB chains organized as two trimers (C3), and six regulatory PyrI chains organized as three dimers (R2).

The catalysed reaction is carbamoyl phosphate + L-aspartate = N-carbamoyl-L-aspartate + phosphate + H(+). The protein operates within pyrimidine metabolism; UMP biosynthesis via de novo pathway; (S)-dihydroorotate from bicarbonate: step 2/3. Its function is as follows. Catalyzes the condensation of carbamoyl phosphate and aspartate to form carbamoyl aspartate and inorganic phosphate, the committed step in the de novo pyrimidine nucleotide biosynthesis pathway. In Delftia acidovorans (strain DSM 14801 / SPH-1), this protein is Aspartate carbamoyltransferase catalytic subunit.